Consider the following 179-residue polypeptide: Translation initiation factor IF-3 (179 aa).

This sequence belongs to the IF-3 family. In terms of assembly, monomer.

It localises to the cytoplasm. Functionally, IF-3 binds to the 30S ribosomal subunit and shifts the equilibrium between 70S ribosomes and their 50S and 30S subunits in favor of the free subunits, thus enhancing the availability of 30S subunits on which protein synthesis initiation begins. This Leptospira borgpetersenii serovar Hardjo-bovis (strain L550) protein is Translation initiation factor IF-3.